Consider the following 556-residue polypeptide: Arginine--tRNA ligase (556 aa).

A 'HIGH' region motif is present at residues 132–142 (ANPTGPIHLGG).

It belongs to the class-I aminoacyl-tRNA synthetase family. In terms of assembly, monomer.

The protein localises to the cytoplasm. The enzyme catalyses tRNA(Arg) + L-arginine + ATP = L-arginyl-tRNA(Arg) + AMP + diphosphate. The polypeptide is Arginine--tRNA ligase (Kocuria rhizophila (strain ATCC 9341 / DSM 348 / NBRC 103217 / DC2201)).